We begin with the raw amino-acid sequence, 482 residues long: Methylenetetrahydrofolate--tRNA-(uracil-5-)-methyltransferase TrmFO (482 aa).

11–16 (GAGLAG) is a binding site for FAD.

Belongs to the MnmG family. TrmFO subfamily. FAD is required as a cofactor.

The protein resides in the cytoplasm. It catalyses the reaction uridine(54) in tRNA + (6R)-5,10-methylene-5,6,7,8-tetrahydrofolate + NADH + H(+) = 5-methyluridine(54) in tRNA + (6S)-5,6,7,8-tetrahydrofolate + NAD(+). The catalysed reaction is uridine(54) in tRNA + (6R)-5,10-methylene-5,6,7,8-tetrahydrofolate + NADPH + H(+) = 5-methyluridine(54) in tRNA + (6S)-5,6,7,8-tetrahydrofolate + NADP(+). In terms of biological role, catalyzes the folate-dependent formation of 5-methyl-uridine at position 54 (M-5-U54) in all tRNAs. The protein is Methylenetetrahydrofolate--tRNA-(uracil-5-)-methyltransferase TrmFO of Nitratidesulfovibrio vulgaris (strain DP4) (Desulfovibrio vulgaris).